Consider the following 130-residue polypeptide: Small ribosomal subunit protein uS8 (130 aa).

This sequence belongs to the universal ribosomal protein uS8 family. As to quaternary structure, part of the 30S ribosomal subunit. Contacts proteins S5 and S12.

Its function is as follows. One of the primary rRNA binding proteins, it binds directly to 16S rRNA central domain where it helps coordinate assembly of the platform of the 30S subunit. The sequence is that of Small ribosomal subunit protein uS8 from Shewanella frigidimarina (strain NCIMB 400).